A 507-amino-acid chain; its full sequence is ATP synthase subunit alpha, chloroplastic (507 aa).

170 to 177 (GDRQTGKT) contacts ATP. At Thr-257 the chain carries Phosphothreonine.

The protein belongs to the ATPase alpha/beta chains family. In terms of assembly, F-type ATPases have 2 components, CF(1) - the catalytic core - and CF(0) - the membrane proton channel. CF(1) has five subunits: alpha(3), beta(3), gamma(1), delta(1), epsilon(1). CF(0) has four main subunits: a, b, b' and c.

It localises to the plastid. The protein resides in the chloroplast thylakoid membrane. It carries out the reaction ATP + H2O + 4 H(+)(in) = ADP + phosphate + 5 H(+)(out). Functionally, produces ATP from ADP in the presence of a proton gradient across the membrane. The alpha chain is a regulatory subunit. This is ATP synthase subunit alpha, chloroplastic from Arabis hirsuta (Hairy rock-cress).